Consider the following 354-residue polypeptide: MQAIALPEEICWLLEDAEDFLAEGLQNENLSPGAQDQRDHILRGFQQIKSRYCWDFQPQGDDLGQDGSDENLSGTHGPALASDASFWSDYQEEGIDDIIRGAQELDNVIKQGYLEKKSKDHSFFGSEWQKRWCVISRGLFLYYANEKSKQPKGTFLIKGYNVRMAPHLRKDSKKDSCFELTSQDRRSYEFTAFSPAEARDWVDQISFLLKDLSSLTIPFEEEEEEEEEDKEQEEMYNDIDGFDSARSGSQGRAMALPEPLDKEEDVYEVLPDEDDLEEDACGAHRRRVDYADYYQGLWDCHGDQPDELSFQRGDLIRILSKEYNMYGWWVGELNSIIGIVPKDYLTTAFEMEGR.

The PH domain occupies 107-210 (NVIKQGYLEK…WVDQISFLLK (104 aa)). A phosphotyrosine mark is found at Tyr-142 and Tyr-236. Tyr-267 and Tyr-290 each carry phosphotyrosine; by FYN. The segment at 285 to 290 (RRRVDY) is interaction with FYB1. The region spanning 289 to 350 (DYADYYQGLW…PKDYLTTAFE (62 aa)) is the SH3 domain.

The protein belongs to the SKAP family. Homodimer. Interacts with FYN. Interacts with PTPRC. Interacts with GRB2 when phosphorylated on Tyr-267. Interacts with FYB1, which is required for SKAP2 protein stability. Part of a complex consisting of SKAP1, FYB1 and CLNK. Interacts with RASGRP1. Interacts with FYB2. Phosphorylated on tyrosines. Phosphorylation by FYN on Tyr-267 is required for GRB2 interaction. Phosphorylation by FYN on Tyr-290 abolishes interaction with FYB1. Tyr-236 is dephosphorylated by PTPRC. Expressed in mast cells (at protein level).

The protein resides in the cytoplasm. Its subcellular location is the nucleus. The protein localises to the cell membrane. Its function is as follows. Positively regulates T-cell receptor signaling by enhancing the MAP kinase pathway. Required for optimal conjugation between T-cells and antigen-presenting cells by promoting the clustering of integrin ITGAL on the surface of T-cells. May be involved in high affinity immunoglobulin epsilon receptor signaling in mast cells. In Rattus norvegicus (Rat), this protein is Src kinase-associated phosphoprotein 1 (Skap1).